The primary structure comprises 98 residues: Ig heavy chain V region 6.96 (98 aa).

Positions 1-98 (EVQLVESGGG…EDTAMYYCAR (98 aa)) constitute an Ig-like domain.

This is Ig heavy chain V region 6.96 from Mus musculus (Mouse).